A 77-amino-acid polypeptide reads, in one-letter code: Translation initiation factor IF-1, chloroplastic (77 aa).

The 71-residue stretch at 1–71 (MKEQKLIHEG…TRGRIIYRLR (71 aa)) folds into the S1-like domain.

Belongs to the IF-1 family. As to quaternary structure, component of the 30S ribosomal translation pre-initiation complex which assembles on the 30S ribosome in the order IF-2 and IF-3, IF-1 and N-formylmethionyl-tRNA(fMet); mRNA recruitment can occur at any time during PIC assembly.

It localises to the plastid. Its subcellular location is the chloroplast. In terms of biological role, one of the essential components for the initiation of protein synthesis. Stabilizes the binding of IF-2 and IF-3 on the 30S subunit to which N-formylmethionyl-tRNA(fMet) subsequently binds. Helps modulate mRNA selection, yielding the 30S pre-initiation complex (PIC). Upon addition of the 50S ribosomal subunit IF-1, IF-2 and IF-3 are released leaving the mature 70S translation initiation complex. The chain is Translation initiation factor IF-1, chloroplastic from Liriodendron tulipifera (Tuliptree).